A 190-amino-acid polypeptide reads, in one-letter code: Vascular endothelial growth factor A (190 aa).

Residues 1–26 form the signal peptide; it reads MNFLLSWVHWSLALLLYLHHAKWSQA. Intrachain disulfides connect cysteine 51–cysteine 93, cysteine 82–cysteine 127, and cysteine 86–cysteine 129. N-linked (GlcNAc...) asparagine glycosylation is present at asparagine 100.

Belongs to the PDGF/VEGF growth factor family. Homodimer; disulfide-linked. Also found as heterodimer with PGF. Interacts with NRP1. Interacts with BSG. Interacts with CD82; this interaction inhibits VEGFA-mediated signaling pathway.

It is found in the secreted. Growth factor active in angiogenesis, vasculogenesis and endothelial cell growth. Induces endothelial cell proliferation, promotes cell migration, inhibits apoptosis and induces permeabilization of blood vessels. Binds to the FLT1/VEGFR1 and KDR/VEGFR2 receptors, heparan sulfate and heparin. Binding to NRP1 receptor initiates a signaling pathway needed for motor neuron axon guidance and cell body migration, including for the caudal migration of facial motor neurons from rhombomere 4 to rhombomere 6 during embryonic development. Also binds the DEAR/FBXW7-AS1 receptor. The sequence is that of Vascular endothelial growth factor A (VEGFA) from Bos taurus (Bovine).